The chain runs to 238 residues: MORN repeat-containing protein 3 (238 aa).

MORN repeat units lie at residues 38–60, 62–84, 91–113, 114–136, 137–159, 160–182, and 184–205; these read YTGEWLNNLRHGKGTYMWKRRKS, YEGDWKCGERSGFGTYSVQDSNT, YSGYWDNDKKHGYGTHFYSAKEY, YEGEWKCGKRCGWGRMYFANGDI, YEGEWLEDKHSGQGMLCLANENR, YEGSWKDGKKHGPGKFYYLNKGQ, and YEGVWVEDIPKCGTMVDFGRTE.

It is found in the cytoplasmic vesicle. The protein resides in the secretory vesicle. It localises to the acrosome. Functionally, assembles a suppression complex (suppresome) by tethering SIRT1 and MDM2 to regulate composite modifications of p53/TP53. Confers both deacetylation-mediated functional inactivation, by SIRT1, and ubiquitination-dependent degradation, by MDM2, of p53/TP53, promoting a proliferative and cell survival behaviors. May play a role in the regulation of spermatogenesis. The sequence is that of MORN repeat-containing protein 3 (morn3) from Xenopus laevis (African clawed frog).